Reading from the N-terminus, the 77-residue chain is Pollen allergen Amb p 5b (77 aa).

An N-terminal signal peptide occupies residues methionine 1–lysine 22. 3 disulfide bridges follow: cysteine 26–cysteine 61, cysteine 33–cysteine 48, and cysteine 40–cysteine 54.

It localises to the secreted. This is Pollen allergen Amb p 5b from Ambrosia psilostachya (Western ragweed).